A 276-amino-acid polypeptide reads, in one-letter code: 3' cyclic ADP-D-ribose synthase HopAM1 (276 aa).

Over residues 20-38 the composition is skewed to polar residues; the sequence is VEASQVKSAGTSSTTNIDS. The interval 20–39 is disordered; that stretch reads VEASQVKSAGTSSTTNIDSK. The TIR domain stretch occupies residues 165 to 214; the sequence is KNGIAHAKKMAFFITPEWLGSDFCKQEFQWLSETKNKDIKSAFVIFKDVD. The active site involves Gln190.

Homodimer.

The protein resides in the host cytoplasm. It is found in the host cytosol. It carries out the reaction NAD(+) = 3'cADPR + nicotinamide + H(+). NAD(+) hydrolase (NADase) that cleaves NAD(+) into nicotinamide and 3' cyclic ADP-D-ribose (3'cADPR, v2-cADPR). Upon infiltration of A.thaliana with this bacteria an effector-triggered immunity-like phenotype (ETI-like, cell death with severe chlorosis) is seen, 3'cADPR levels rise while NAD(+) levels remain constant. Plant immune responses are suppressed. Triggers hypersensitive response-like cell death in Nicotiana tabacum cv. Xanthi and N.benthamiana when transiently expressed, depletes NAD(+) in N.benthamiana. Causes cell death upon induction in yeast due to NAD(+) depletion and/or 3'cADPR itself. Transgenic A.thaliana expressing HopAM1 suppresses its plant immune system upon challenge; the plants produce 3'cADPR without significantly depleting NAD(+). In Pseudomonas syringae pv. tomato (strain ATCC BAA-871 / DC3000), this protein is 3' cyclic ADP-D-ribose synthase HopAM1.